A 317-amino-acid polypeptide reads, in one-letter code: Melanocyte-stimulating hormone receptor (317 aa).

Residues 1–37 (MPVQGSQRRLLGSLNSTPTATPRLGLAANQTGARCLE) lie on the Extracellular side of the membrane. N-linked (GlcNAc...) asparagine glycosylation is present at Asn29. Residues 38-63 (VSIPDGLFLSLGLVSLVENVLVVVAI) traverse the membrane as a helical segment. At 64–72 (ARNRNLHSP) the chain is on the cytoplasmic side. A helical membrane pass occupies residues 73-93 (MYCFICCLALSDLLVSGSNML). Residues 94-118 (ETAVFLLLEAGALAARAAVVQQLDN) lie on the Extracellular side of the membrane. A helical transmembrane segment spans residues 119 to 140 (VIDVITCSSMLSSLCFLGAIAV). Residues 141 to 163 (DRYISIFYALRYHSIVTLRRARR) lie on the Cytoplasmic side of the membrane. The chain crosses the membrane as a helical span at residues 164 to 183 (VVAAIWVASVLFSTLFIAYC). Topologically, residues 184 to 191 (DHAAVLLC) are extracellular. Residues 192 to 211 (LVVFFLAMLVLMAVLYVHML) form a helical membrane-spanning segment. The Cytoplasmic portion of the chain corresponds to 212 to 240 (ARACQHAQGIAQLHKRQRPAHQGVGLKGA). A helical transmembrane segment spans residues 241 to 266 (ATLTILLGIFFLCWGPFFLHLTLIVL). The Extracellular portion of the chain corresponds to 267–279 (CPQHPTCSCIFKN). A helical transmembrane segment spans residues 280 to 300 (FNLFLTLIICNAIIDPLIYAF). The Cytoplasmic segment spans residues 301-317 (RSQELRRTLKKVLLCSW). Residue Cys315 is the site of S-palmitoyl cysteine attachment.

Belongs to the G-protein coupled receptor 1 family. In terms of assembly, interacts with MGRN1, but does not undergo MGRN1-mediated ubiquitination; this interaction competes with GNAS-binding and thus inhibits agonist-induced cAMP production. Interacts with OPN3; the interaction results in a decrease in MC1R-mediated cAMP signaling and ultimately a decrease in melanin production in melanocytes.

It localises to the cell membrane. Its function is as follows. Receptor for MSH (alpha, beta and gamma) and ACTH. The activity of this receptor is mediated by G proteins which activate adenylate cyclase. Mediates melanogenesis, the production of eumelanin (black/brown) and phaeomelanin (red/yellow), via regulation of cAMP signaling in melanocytes. In Trachypithecus obscurus (Dusky leaf-monkey), this protein is Melanocyte-stimulating hormone receptor (MC1R).